Consider the following 189-residue polypeptide: dTTP/UTP pyrophosphatase (189 aa).

The Proton acceptor role is filled by D73.

Belongs to the Maf family. YhdE subfamily. The cofactor is a divalent metal cation.

Its subcellular location is the cytoplasm. The catalysed reaction is dTTP + H2O = dTMP + diphosphate + H(+). It catalyses the reaction UTP + H2O = UMP + diphosphate + H(+). In terms of biological role, nucleoside triphosphate pyrophosphatase that hydrolyzes dTTP and UTP. May have a dual role in cell division arrest and in preventing the incorporation of modified nucleotides into cellular nucleic acids. This Vibrio parahaemolyticus serotype O3:K6 (strain RIMD 2210633) protein is dTTP/UTP pyrophosphatase.